Reading from the N-terminus, the 705-residue chain is Polyphosphate kinase (705 aa).

Position 58 (N58) interacts with ATP. Mg(2+) contacts are provided by R389 and R419. The active-site Phosphohistidine intermediate is H449. Residues Y482, R578, and H606 each coordinate ATP.

The protein belongs to the polyphosphate kinase 1 (PPK1) family. It depends on Mg(2+) as a cofactor. In terms of processing, an intermediate of this reaction is the autophosphorylated ppk in which a phosphate is covalently linked to a histidine residue through a N-P bond.

The enzyme catalyses [phosphate](n) + ATP = [phosphate](n+1) + ADP. In terms of biological role, catalyzes the reversible transfer of the terminal phosphate of ATP to form a long-chain polyphosphate (polyP). This Halalkalibacterium halodurans (strain ATCC BAA-125 / DSM 18197 / FERM 7344 / JCM 9153 / C-125) (Bacillus halodurans) protein is Polyphosphate kinase.